Consider the following 187-residue polypeptide: Biogenesis of lysosome-related organelles complex 1 subunit 5 (187 aa).

The segment at 1-26 is disordered; it reads MSGGGTETPVGCEAAPGGGSKKRDSL. Ser-2 carries the post-translational modification N-acetylserine. Positions 154–186 form a coiled coil; the sequence is NKRAEVDEEHRKAMERLKEQYAEMEKDLAKFST.

This sequence belongs to the BLOC1S5 family. In terms of assembly, interacts with BLOC1S4, DTNBP1/BLOC1S7 and PI4K2A. Component of the biogenesis of lysosome-related organelles complex 1 (BLOC-1) composed of BLOC1S1, BLOC1S2, BLOC1S3, BLOC1S4, BLOC1S5, BLOC1S6, DTNBP1/BLOC1S7 and SNAPIN/BLOC1S8. Octamer composed of one copy each BLOC1S1, BLOC1S2, BLOC1S3, BLOC1S4, BLOC1S5, BLOC1S6, DTNBP1/BLOC1S7 and SNAPIN/BLOC1S8. The BLOC-1 complex associates with the AP-3 protein complex and membrane protein cargos. Interacts with BLOC1S6.

Component of the BLOC-1 complex, a complex that is required for normal biogenesis of lysosome-related organelles (LRO), such as platelet dense granules and melanosomes. In concert with the AP-3 complex, the BLOC-1 complex is required to target membrane protein cargos into vesicles assembled at cell bodies for delivery into neurites and nerve terminals. The BLOC-1 complex, in association with SNARE proteins, is also proposed to be involved in neurite extension. Plays a role in intracellular vesicle trafficking. The sequence is that of Biogenesis of lysosome-related organelles complex 1 subunit 5 from Homo sapiens (Human).